Consider the following 292-residue polypeptide: MQKYEKLEKIGEGTYGTVFKAKNRETHEIVALKRVRLDDDDEGVPSSALREICLLKELKHKNIVRLHDVLHSDKKLTLVFEFCDQDLKKYFDSCNGDLDPEIVKSFLFQLLKGLGFCHSRNVLHRDLKPQNLLINRNGELKLADFGLARAFGIPVRCYSAEVVTLWYRPPDVLFGAKLYSTSIDMWSAGCIFAELANAGRPLFPGNDVDDQLKRIFRLLGTPTEEQWPAMTKLPDYKPYPMYPATTSLVNVVPKLNATGRDLLQNLLKCNPVQRISAEEALQHPYFSDFCPP.

The 283-residue stretch at 4 to 286 (YEKLEKIGEG…AEEALQHPYF (283 aa)) folds into the Protein kinase domain. Residues 10-18 (IGEGTYGTV) and Lys-33 each bind ATP. Tyr-15 is subject to Phosphotyrosine; by ABL1, EPHA4 and FYN. Thr-17 is modified (phosphothreonine). Position 56 is an N6-acetyllysine (Lys-56). Position 72 is a phosphoserine (Ser-72). The active-site Proton acceptor is Asp-126. Residue Ser-159 is modified to Phosphoserine.

It belongs to the protein kinase superfamily. CMGC Ser/Thr protein kinase family. CDC2/CDKX subfamily. Heterodimer composed of a catalytic subunit CDK5 and a regulatory subunit CDK5R1 (p25) and macromolecular complex composed of at least CDK5, CDK5R1 (p35) and CDK5RAP1 or CDK5RAP2 or CDK5RAP3. Only the heterodimer shows kinase activity. Under neurotoxic stress and neuronal injury conditions, p35 is cleaved by calpain to generate p25 that hyperactivates CDK5, that becomes functionally disabled and often toxic. Found in a trimolecular complex with CABLES1 and ABL1. Interacts with CABLES1 and CABLES2. Interacts with AATK and GSTP1. Binds to HDAC1 when in complex with p25. Interaction with myristoylation p35 promotes CDK5 association with membranes. Both isoforms 1 and 2 interacts with beta-catenin/CTNNB1. Interacts with delta-catenin/CTNND2 and APEX1. Interacts with P53/TP53 in neurons. Interacts with EPHA4; may mediate the activation of NGEF by EPHA4. Interacts with PTK2/FAK1. The complex p35/CDK5 interacts with CLOCK. Post-translationally, phosphorylation on Tyr-15 by ABL1 and FYN, and on Ser-159 by casein kinase 1 promotes kinase activity. By contrast, phosphorylation at Thr-14 inhibits activity. Phosphorylation at Ser-159 is essential for maximal catalytic activity.

The protein localises to the nucleus. Its subcellular location is the cytoplasm. The protein resides in the cell membrane. It is found in the perikaryon. It localises to the cell projection. The protein localises to the lamellipodium. Its subcellular location is the growth cone. The protein resides in the postsynaptic density. It is found in the synapse. The catalysed reaction is L-seryl-[protein] + ATP = O-phospho-L-seryl-[protein] + ADP + H(+). It catalyses the reaction L-threonyl-[protein] + ATP = O-phospho-L-threonyl-[protein] + ADP + H(+). Inhibited by 2-(1-ethyl-2-hydroxyethylamino)-6-benzylamino-9-isopropylpurine (roscovitine), 1-isopropyl-4-aminobenzyl-6-ether-linked benzimidazoles, resveratrol, AT-7519 and olomoucine. Activated by CDK5R1 (p35) and CDK5R2 (p39) during the development of the nervous system; degradation of CDK5R1 (p35) and CDK5R2 (p39) by proteasome result in down regulation of kinase activity, during this process, CDK5 phosphorylates p35 and induces its ubiquitination and subsequent degradation. Kinase activity is mainly determined by the amount of p35 available and subcellular location; reversible association to plasma membrane inhibits activity. Long-term inactivation as well as CDK5R1 (p25)-mediated hyperactivation of CDK5 triggers cell death. The pro-death activity of hyperactivated CDK5 is suppressed by membrane association of CDK5, via myristoylation of p35. Brain-derived neurotrophic factor, glial-derived neurotrophic factor, nerve growth factor (NGF), retinoic acid, laminin and neuregulin promote activity. Neurotoxicity enhances nuclear activity, thus leading to MEF2 phosphorylation and inhibition prior to apoptosis of cortical neurons. Repression by GSTP1 via p25/p35 translocation prevents neurodegeneration. In terms of biological role, proline-directed serine/threonine-protein kinase essential for neuronal cell cycle arrest and differentiation and may be involved in apoptotic cell death in neuronal diseases by triggering abortive cell cycle re-entry. Interacts with D1 and D3-type G1 cyclins. Phosphorylates SRC, NOS3, VIM/vimentin, p35/CDK5R1, MEF2A, SIPA1L1, SH3GLB1, PXN, PAK1, MCAM/MUC18, SEPT5, SYN1, DNM1, AMPH, SYNJ1, CDK16, RAC1, RHOA, CDC42, TONEBP/NFAT5, MAPT/TAU, MAP1B, histone H1, p53/TP53, HDAC1, APEX1, PTK2/FAK1, huntingtin/HTT, ATM, MAP2, NEFH and NEFM. Regulates several neuronal development and physiological processes including neuronal survival, migration and differentiation, axonal and neurite growth, synaptogenesis, oligodendrocyte differentiation, synaptic plasticity and neurotransmission, by phosphorylating key proteins. Negatively regulates the CACNA1B/CAV2.2 -mediated Ca(2+) release probability at hippocampal neuronal soma and synaptic terminals. Activated by interaction with CDK5R1 (p35) and CDK5R2 (p39), especially in postmitotic neurons, and promotes CDK5R1 (p35) expression in an autostimulation loop. Phosphorylates many downstream substrates such as Rho and Ras family small GTPases (e.g. PAK1, RAC1, RHOA, CDC42) or microtubule-binding proteins (e.g. MAPT/TAU, MAP2, MAP1B), and modulates actin dynamics to regulate neurite growth and/or spine morphogenesis. Also phosphorylates exocytosis associated proteins such as MCAM/MUC18, SEPT5, SYN1, and CDK16/PCTAIRE1 as well as endocytosis associated proteins such as DNM1, AMPH and SYNJ1 at synaptic terminals. In the mature central nervous system (CNS), regulates neurotransmitter movements by phosphorylating substrates associated with neurotransmitter release and synapse plasticity; synaptic vesicle exocytosis, vesicles fusion with the presynaptic membrane, and endocytosis. Promotes cell survival by activating anti-apoptotic proteins BCL2 and STAT3, and negatively regulating of JNK3/MAPK10 activity. Phosphorylation of p53/TP53 in response to genotoxic and oxidative stresses enhances its stabilization by preventing ubiquitin ligase-mediated proteasomal degradation, and induces transactivation of p53/TP53 target genes, thus regulating apoptosis. Phosphorylation of p35/CDK5R1 enhances its stabilization by preventing calpain-mediated proteolysis producing p25/CDK5R1 and avoiding ubiquitin ligase-mediated proteasomal degradation. During aberrant cell-cycle activity and DNA damage, p25/CDK5 activity elicits cell-cycle activity and double-strand DNA breaks that precedes neuronal death by deregulating HDAC1. DNA damage triggered phosphorylation of huntingtin/HTT in nuclei of neurons protects neurons against polyglutamine expansion as well as DNA damage mediated toxicity. Phosphorylation of PXN reduces its interaction with PTK2/FAK1 in matrix-cell focal adhesions (MCFA) during oligodendrocytes (OLs) differentiation. Negative regulator of Wnt/beta-catenin signaling pathway. Activator of the GAIT (IFN-gamma-activated inhibitor of translation) pathway, which suppresses expression of a post-transcriptional regulon of proinflammatory genes in myeloid cells; phosphorylates the linker domain of glutamyl-prolyl tRNA synthetase (EPRS) in a IFN-gamma-dependent manner, the initial event in assembly of the GAIT complex. Phosphorylation of SH3GLB1 is required for autophagy induction in starved neurons. Phosphorylation of TONEBP/NFAT5 in response to osmotic stress mediates its rapid nuclear localization. MEF2 is inactivated by phosphorylation in nucleus in response to neurotoxin, thus leading to neuronal apoptosis. APEX1 AP-endodeoxyribonuclease is repressed by phosphorylation, resulting in accumulation of DNA damage and contributing to neuronal death. NOS3 phosphorylation down regulates NOS3-derived nitrite (NO) levels. SRC phosphorylation mediates its ubiquitin-dependent degradation and thus leads to cytoskeletal reorganization. May regulate endothelial cell migration and angiogenesis via the modulation of lamellipodia formation. Involved in dendritic spine morphogenesis by mediating the EFNA1-EPHA4 signaling. The complex p35/CDK5 participates in the regulation of the circadian clock by modulating the function of CLOCK protein: phosphorylates CLOCK at 'Thr-451' and 'Thr-461' and regulates the transcriptional activity of the CLOCK-BMAL1 heterodimer in association with altered stability and subcellular distribution. In Bos taurus (Bovine), this protein is Cyclin-dependent kinase 5.